The primary structure comprises 521 residues: Probable cytochrome P450 12d1 distal, mitochondrial (521 aa).

Residues 1 to 19 constitute a mitochondrion transit peptide; sequence MNTLSSARSVAIYVGPVRS. Position 467 (cysteine 467) interacts with heme.

This sequence belongs to the cytochrome P450 family. The cofactor is heme.

The protein localises to the mitochondrion membrane. The polypeptide is Probable cytochrome P450 12d1 distal, mitochondrial (Drosophila melanogaster (Fruit fly)).